A 428-amino-acid polypeptide reads, in one-letter code: UDP-N-acetylglucosamine 1-carboxyvinyltransferase (428 aa).

A phosphoenolpyruvate-binding site is contributed by 25–26; sequence KN. Arginine 102 is a UDP-N-acetyl-alpha-D-glucosamine binding site. Cysteine 126 serves as the catalytic Proton donor. Cysteine 126 carries the post-translational modification 2-(S-cysteinyl)pyruvic acid O-phosphothioketal. Aspartate 316 and valine 338 together coordinate UDP-N-acetyl-alpha-D-glucosamine.

The protein belongs to the EPSP synthase family. MurA subfamily.

The protein localises to the cytoplasm. The catalysed reaction is phosphoenolpyruvate + UDP-N-acetyl-alpha-D-glucosamine = UDP-N-acetyl-3-O-(1-carboxyvinyl)-alpha-D-glucosamine + phosphate. Its pathway is cell wall biogenesis; peptidoglycan biosynthesis. In terms of biological role, cell wall formation. Adds enolpyruvyl to UDP-N-acetylglucosamine. The protein is UDP-N-acetylglucosamine 1-carboxyvinyltransferase of Anaplasma marginale (strain St. Maries).